We begin with the raw amino-acid sequence, 360 residues long: A-type ATP synthase subunit C (360 aa).

It belongs to the V-ATPase V0D/AC39 subunit family. In terms of assembly, has multiple subunits, A(3), B(3), C, D, E, F, G, I and K(x); there may be a few other subunits as well.

The protein resides in the cell membrane. Functionally, component of the A-type ATP synthase that produces ATP from ADP in the presence of a proton gradient across the membrane. The protein is A-type ATP synthase subunit C of Methanosarcina mazei (strain ATCC BAA-159 / DSM 3647 / Goe1 / Go1 / JCM 11833 / OCM 88) (Methanosarcina frisia).